The sequence spans 161 residues: Non-secretory ribonuclease (161 aa).

Residues 1–27 (MVPKLFTSQICLLLLLGLLAVEGSLHV) form the signal peptide. Trp-34 carries C-linked (Man) tryptophan glycosylation. The active-site Proton acceptor is the His-42. Asn-44 carries N-linked (GlcNAc...) asparagine glycosylation. 4 cysteine pairs are disulfide-bonded: Cys-50–Cys-110, Cys-64–Cys-123, Cys-82–Cys-138, and Cys-89–Cys-98. Tyr-60 is subject to 3'-nitrotyrosine. 65–69 (KNQNT) contacts substrate. Residues Asn-86, Asn-92, Asn-111, and Asn-119 are each glycosylated (N-linked (GlcNAc...) asparagine). The active-site Proton donor is the His-156.

Belongs to the pancreatic ribonuclease family. As to quaternary structure, interacts with and forms a tight 1:1 complex with RNH1. Dimerization of two such complexes may occur.

It localises to the lysosome. Its subcellular location is the cytoplasmic granule. It carries out the reaction an [RNA] containing cytidine + H2O = an [RNA]-3'-cytidine-3'-phosphate + a 5'-hydroxy-ribonucleotide-3'-[RNA].. The catalysed reaction is an [RNA] containing uridine + H2O = an [RNA]-3'-uridine-3'-phosphate + a 5'-hydroxy-ribonucleotide-3'-[RNA].. This is a non-secretory ribonuclease. It is a pyrimidine specific nuclease with a slight preference for U. Cytotoxin and helminthotoxin. Possesses a wide variety of biological activities. This chain is Non-secretory ribonuclease (RNASE2), found in Gorilla gorilla gorilla (Western lowland gorilla).